Reading from the N-terminus, the 256-residue chain is POU domain class 2-associating factor 1 (256 aa).

Positions 1-24 (MLWQKSTAPEQAPAPPRPYQGVRV) are disordered. The region spanning 16–38 (PRPYQGVRVKEPVKELLRRKRGH) is the OCA domain.

It belongs to the POU2AF family. As to quaternary structure, interacts with POU2F1/OCT1 and POU2F2/OCT2; the interaction increases POU2F1 and POU2F2 transactivation activity. In terms of processing, ubiquitinated; mediated by SIAH1 or SIAH2 and leading to its subsequent proteasomal degradation. In terms of tissue distribution, B-cell specific.

The protein localises to the nucleus. Functionally, transcriptional coactivator that specifically associates with either POU2F1/OCT1 or POU2F2/OCT2. It boosts the POU2F1/OCT1 mediated promoter activity and to a lesser extent, that of POU2F2/OCT2. It recognizes the POU domains of POU2F1/OCT1 and POU2F2/OCT2. It is essential for the response of B-cells to antigens and required for the formation of germinal centers. Regulates IL6 expression in B cells as POU2F2/OCT2 coactivator. This is POU domain class 2-associating factor 1 from Mus musculus (Mouse).